The chain runs to 109 residues: Thiosulfate sulfurtransferase GlpE (109 aa).

The region spanning 16 to 104 (REQGAVVVDV…WRTTFPSETA (89 aa)) is the Rhodanese domain. Catalysis depends on C64, which acts as the Cysteine persulfide intermediate.

This sequence belongs to the GlpE family.

The protein localises to the cytoplasm. It catalyses the reaction thiosulfate + hydrogen cyanide = thiocyanate + sulfite + 2 H(+). The catalysed reaction is thiosulfate + [thioredoxin]-dithiol = [thioredoxin]-disulfide + hydrogen sulfide + sulfite + 2 H(+). Transferase that catalyzes the transfer of sulfur from thiosulfate to thiophilic acceptors such as cyanide or dithiols. May function in a CysM-independent thiosulfate assimilation pathway by catalyzing the conversion of thiosulfate to sulfite, which can then be used for L-cysteine biosynthesis. This Pseudomonas fluorescens (strain Pf0-1) protein is Thiosulfate sulfurtransferase GlpE.